The following is a 238-amino-acid chain: Probable transcriptional regulatory protein YeeN (238 aa).

This sequence belongs to the TACO1 family. YeeN subfamily.

The protein resides in the cytoplasm. The chain is Probable transcriptional regulatory protein YeeN from Escherichia coli O157:H7.